The sequence spans 173 residues: Co-chaperone protein HscB homolog (173 aa).

The region spanning 5–77 (CHYALFDLQP…PRRARYLLAI (73 aa)) is the J domain.

The protein belongs to the HscB family. In terms of assembly, interacts with HscA and stimulates its ATPase activity.

Its function is as follows. Co-chaperone involved in the maturation of iron-sulfur cluster-containing proteins. Seems to help targeting proteins to be folded toward HscA. In Pseudomonas putida (strain GB-1), this protein is Co-chaperone protein HscB homolog.